The following is a 914-amino-acid chain: Solute carrier family 12 member 9 (914 aa).

The Cytoplasmic segment spans residues 1-36 (MASENSPLLAYRLLGEEGAAFPPNGAGGSGVASARK). Position 6 is a phosphoserine (S6). The helical transmembrane segment at 37–57 (LSTFLGVVVPTVLSMFSIVVF) threads the bilayer. Residues 58 to 72 (LRIGFVVGHAGLLQA) lie on the Extracellular side of the membrane. The chain crosses the membrane as a helical span at residues 73–93 (LAMLLVAYVILALTVLSVCAI). Over 94–119 (ATNGAVRGGGAYFMISRTLGPEVGGS) the chain is Cytoplasmic. The helical transmembrane segment at 120 to 140 (IGLMFYLANVCGCAVSLLGLV) threads the bilayer. Over 141–167 (ESILDVFGADVTGSSGIKVLPQGYGWN) the chain is Extracellular. Residues 168–188 (LLYGSLLLGLVGGVCALGAGL) traverse the membrane as a helical segment. The Cytoplasmic segment spans residues 189–193 (YARAS). A helical membrane pass occupies residues 194 to 214 (FLTFLLVSGSLASVLVSFVAV). Over 215 to 262 (GPRNITLAPRPGTNGSSVPPRHGHFTGFNGSTLKDNLGAGYAEDYTTG) the chain is Extracellular. N-linked (GlcNAc...) asparagine glycosylation is found at N218, N228, and N243. A helical transmembrane segment spans residues 263–283 (AMMTFASVFAVLFNGCTGIMA). Residues 284 to 297 (GANMSGELKDPSRA) are Cytoplasmic-facing. A helical membrane pass occupies residues 298-318 (IPLGTIIAVAYTFFIYILLFF). At 319–338 (LSSFTCDRALLQGDYGFFRD) the chain is on the extracellular side. The helical transmembrane segment at 339-359 (ISLWPPLVLIGIYATALSASM) threads the bilayer. The Cytoplasmic portion of the chain corresponds to 360-376 (SSLIGASRILHALAQDD). A helical transmembrane segment spans residues 377–399 (LFGVILAPAKVVSGGGNPWGAVL). Residues 400–416 (YSWGLVQLVLLAGKLNT) lie on the Extracellular side of the membrane. A helical membrane pass occupies residues 417–437 (LAAVVTVFYLVAYAAVDLSCL). Residues 438–466 (SLEWASAPNFRPTFSLFSWHTCLLGVASC) are Cytoplasmic-facing. A helical membrane pass occupies residues 467–487 (LLMMFLISPGAAGGSLLLMGL). Residues 488–740 (LSALLTARGG…LLRPRGGPGY (253 aa)) are Extracellular-facing. A disordered region spans residues 645–678 (PAFSEPAEGTREGGSPALSTLFPPPRAPGSPRAL). The chain crosses the membrane as a helical span at residues 741 to 761 (VDVCGLFLLQMATILSMVPAW). The Cytoplasmic segment spans residues 762–914 (HSARLRIFLC…GVTPVTCTDL (153 aa)). The disordered stretch occupies residues 843 to 864 (QQGRGTGGGPGGPEGRDGEEGP). Gly residues predominate over residues 846 to 855 (RGTGGGPGGP).

Belongs to the SLC12A transporter family. In terms of assembly, interacts with SLC12A1.

It localises to the cell membrane. It is found in the lysosome membrane. Its function is as follows. May be an inhibitor of SLC12A1. Seems to correspond to a subunit of a multimeric transport system and thus, additional subunits may be required for its function. May play a role in lysosomal ion flux and osmoregulation. This Rattus norvegicus (Rat) protein is Solute carrier family 12 member 9 (Slc12a9).